A 459-amino-acid chain; its full sequence is MALKRRKRASATDLYRTCKQSGTCPPDVVPKVEGDTLADRILKWASLGVFFGGLGIGTGSGTGGRTGYVPIGTRPPTVVDIGPVSRPPVVIDPVGAADPSIVTLVEESSVIEAGATVPTFSGSGGFNVTSSSTTTPAVLDITPSGGSVQVSSTSFINPLFTEPSIIEPPQAGDLAGHVISSTPTAGSHSFEEIPMHTFATSEGPGSSTPLPGIRRLARPRLNLYSKANQQIKVANPTFMSDPASLITYDNPIFDPEETIIFEHPSIYTPPDPDFLDIVSLHRPALTSRQGTVRFSRLGQRATLRTRSGRRIGARVHFYHDISPIPSDAVELQPLVPSSSPSITYDIYADPEVLDLPAQHTQPTLTVQGPSLSAASASTKVHNVTVPLATGLDTPVTSGPDVDFAHAPAPVPAVPYVPATHPHSIYIQGSDFYLLPAYVFFPKRRKRVPYSFSDGFVAAW.

The short motif at 1-9 (MALKRRKRA) is the Nuclear localization signal element. A disulfide bridge connects residues Cys-18 and Cys-24. The short motif at 439–447 (FFPKRRKRV) is the Nuclear localization signal element.

Belongs to the papillomaviridae L2 protein family. As to quaternary structure, interacts with major capsid protein L1. Interacts with E2; this interaction inhibits E2 transcriptional activity but not the DNA replication function E2. Interacts with host GADD45GIP1. Interacts with host HSPA8; this interaction is required for L2 nuclear translocation. Interacts with host importins KPNB2 and KPNB3. Forms a complex with importin alpha2-beta1 heterodimers via interaction with the importin alpha2 adapter. Interacts with host DYNLT1; this interaction is essential for virus intracellular transport during entry. Interacts (via C-terminus) with host retromer subunits VPS35 and VPS29. Highly phosphorylated.

It localises to the virion. Its subcellular location is the host nucleus. The protein localises to the host early endosome. The protein resides in the host Golgi apparatus. Functionally, minor protein of the capsid that localizes along the inner surface of the virion, within the central cavities beneath the L1 pentamers. Plays a role in capsid stabilization through interaction with the major capsid protein L1. Once the virion enters the host cell, L2 escorts the genomic DNA into the nucleus by promoting escape from the endosomal compartments and traffic through the host Golgi network. Mechanistically, the C-terminus of L2 possesses a cell-penetrating peptide that protudes from the host endosome, interacts with host cytoplasmic retromer cargo and thereby mediates the capsid delivery to the host trans-Golgi network. Plays a role through its interaction with host dynein in the intracellular microtubule-dependent transport of viral capsid toward the nucleus. Mediates the viral genome import into the nucleus through binding to host importins. Once within the nucleus, L2 localizes viral genomes to host PML bodies in order to activate early gene expression for establishment of infection. Later on, promotes late gene expression by interacting with the viral E2 protein and by inhibiting its transcriptional activation functions. During virion assembly, encapsidates the genome by direct interaction with the viral DNA. This is Minor capsid protein L2 from Human papillomavirus type 61.